The following is a 358-amino-acid chain: Uroporphyrinogen decarboxylase (358 aa).

Residues 27–31 (RQAGR), D77, Y154, S209, and H327 each bind substrate.

It belongs to the uroporphyrinogen decarboxylase family. Homodimer.

Its subcellular location is the cytoplasm. The catalysed reaction is uroporphyrinogen III + 4 H(+) = coproporphyrinogen III + 4 CO2. It functions in the pathway porphyrin-containing compound metabolism; protoporphyrin-IX biosynthesis; coproporphyrinogen-III from 5-aminolevulinate: step 4/4. Functionally, catalyzes the decarboxylation of four acetate groups of uroporphyrinogen-III to yield coproporphyrinogen-III. This is Uroporphyrinogen decarboxylase from Azoarcus sp. (strain BH72).